A 681-amino-acid chain; its full sequence is DNA-directed RNA polymerase subunit beta' (681 aa).

4 residues coordinate Zn(2+): cysteine 69, cysteine 71, cysteine 87, and cysteine 90. Residues aspartate 489, aspartate 491, and aspartate 493 each coordinate Mg(2+).

The protein belongs to the RNA polymerase beta' chain family. RpoC1 subfamily. In terms of assembly, in plastids the minimal PEP RNA polymerase catalytic core is composed of four subunits: alpha, beta, beta', and beta''. When a (nuclear-encoded) sigma factor is associated with the core the holoenzyme is formed, which can initiate transcription. Mg(2+) is required as a cofactor. The cofactor is Zn(2+).

It is found in the plastid. It localises to the chloroplast. The catalysed reaction is RNA(n) + a ribonucleoside 5'-triphosphate = RNA(n+1) + diphosphate. In terms of biological role, DNA-dependent RNA polymerase catalyzes the transcription of DNA into RNA using the four ribonucleoside triphosphates as substrates. The protein is DNA-directed RNA polymerase subunit beta' of Cycas taitungensis (Prince sago).